The primary structure comprises 451 residues: Homeobox protein meis3-B (451 aa).

Positions 33–64 (HHSLSQSTPYGSTGAAHRVPMPPGMGSNDGLK) are disordered. A compositionally biased stretch (polar residues) spans 34–43 (HSLSQSTPYG). One can recognise an MEIS N-terminal domain in the interval 102–185 (GGDVCSSDSF…PIDLVIDDRD (84 aa)). The interval 206-272 (NNTWIRDHDE…RDKKRNKKRG (67 aa)) is disordered. Over residues 218–230 (STHSGTPGPSSGG) the composition is skewed to low complexity. Over residues 231–242 (LASQSGDNSSEQ) the composition is skewed to polar residues. Positions 267–329 (RNKKRGIFPK…NARRRIVQPM (63 aa)) form a DNA-binding region, homeobox.

It belongs to the TALE/MEIS homeobox family.

The protein resides in the nucleus. Functionally, a caudalizing protein which is required to pattern the anterior/posterior (A/P) axis during central nervous system (CNS) formation. Inhibits anterior neural expression and acts as a transcriptional activator to induce posterior neural gene expression. Maintains a proper A/P balance required for hindbrain formation by activating the FGF/MAPK pathway, which modulates the planar cell polarity (PCP) pathway. Interacts with retinoid signaling during hindbrain patterning. This is Homeobox protein meis3-B (meis3-b) from Xenopus laevis (African clawed frog).